A 110-amino-acid chain; its full sequence is U32-theraphotoxin-Cg1a (110 aa).

The first 19 residues, 1–19, serve as a signal peptide directing secretion; the sequence is MNHCFLILFTLIVFTVVWS. The propeptide occupies 20–43; that stretch reads LEENEEYPDEDEMIESFMDGYSYR. 4 disulfide bridges follow: Cys49–Cys63, Cys56–Cys69, Cys60–Cys105, and Cys62–Cys80.

This sequence belongs to the neurotoxin 03 (Tx2) family. 02 subfamily. Expressed by the venom gland.

It localises to the secreted. Probable ion channel inhibitor. The sequence is that of U32-theraphotoxin-Cg1a from Chilobrachys guangxiensis (Chinese earth tiger tarantula).